The primary structure comprises 248 residues: Anamorsin homolog (248 aa).

The interval 4–130 (FKGLQKSLYI…ETGSSARLSF (127 aa)) is N-terminal SAM-like domain. The tract at residues 131–161 (AKKSPSMNVWKISGDDEELIDEEELLDEEDK) is linker. [2Fe-2S] cluster contacts are provided by C172, C181, C184, and C186. Positions 172 to 186 (CSTTGKRKACKNCSC) are fe-S binding site A. C209, C212, C220, and C223 together coordinate [4Fe-4S] cluster. 2 short sequence motifs (cx2C motif) span residues 209–212 (CGNC) and 220–223 (CSTC). The segment at 209-223 (CGNCYLGDAFRCSTC) is fe-S binding site B.

Belongs to the anamorsin family. In terms of assembly, monomer. It depends on [2Fe-2S] cluster as a cofactor. [4Fe-4S] cluster is required as a cofactor.

Its subcellular location is the cytoplasm. It is found in the mitochondrion intermembrane space. Its function is as follows. Component of the cytosolic iron-sulfur (Fe-S) protein assembly (CIA) machinery. Required for the maturation of extramitochondrial Fe-S proteins. Part of an electron transfer chain functioning in an early step of cytosolic Fe-S biogenesis, facilitating the de novo assembly of a [4Fe-4S] cluster on the cytosolic Fe-S scaffold complex. Electrons are transferred from NADPH via a FAD- and FMN-containing diflavin oxidoreductase. Together with the diflavin oxidoreductase, also required for the assembly of the diferric tyrosyl radical cofactor of ribonucleotide reductase (RNR), probably by providing electrons for reduction during radical cofactor maturation in the catalytic small subunit. In Drosophila mojavensis (Fruit fly), this protein is Anamorsin homolog.